The sequence spans 94 residues: Co-chaperonin GroES (94 aa).

Belongs to the GroES chaperonin family. In terms of assembly, heptamer of 7 subunits arranged in a ring. Interacts with the chaperonin GroEL.

The protein localises to the cytoplasm. Together with the chaperonin GroEL, plays an essential role in assisting protein folding. The GroEL-GroES system forms a nano-cage that allows encapsulation of the non-native substrate proteins and provides a physical environment optimized to promote and accelerate protein folding. GroES binds to the apical surface of the GroEL ring, thereby capping the opening of the GroEL channel. The sequence is that of Co-chaperonin GroES from Lactiplantibacillus plantarum (strain ATCC BAA-793 / NCIMB 8826 / WCFS1) (Lactobacillus plantarum).